Reading from the N-terminus, the 255-residue chain is Glutamate racemase (255 aa).

Substrate is bound by residues 7-8 and 39-40; these read DS and YG. The active-site Proton donor/acceptor is the Cys-70. A substrate-binding site is contributed by 71 to 72; that stretch reads NT. The Proton donor/acceptor role is filled by Cys-181. 182–183 serves as a coordination point for substrate; sequence TH.

The protein belongs to the aspartate/glutamate racemases family.

The enzyme catalyses L-glutamate = D-glutamate. It participates in cell wall biogenesis; peptidoglycan biosynthesis. Provides the (R)-glutamate required for cell wall biosynthesis. This chain is Glutamate racemase, found in Helicobacter pylori (strain G27).